A 72-amino-acid chain; its full sequence is MSKQDVIEVEGTVIEPLPNAMFRVELQNGHKVLAHVSGKIRMNFIRILAGDRVMVELSPYDLTRGRIVYRYK.

In terms of domain architecture, S1-like spans 1–72 (MSKQDVIEVE…TRGRIVYRYK (72 aa)).

The protein belongs to the IF-1 family. Component of the 30S ribosomal translation pre-initiation complex which assembles on the 30S ribosome in the order IF-2 and IF-3, IF-1 and N-formylmethionyl-tRNA(fMet); mRNA recruitment can occur at any time during PIC assembly.

The protein resides in the cytoplasm. One of the essential components for the initiation of protein synthesis. Stabilizes the binding of IF-2 and IF-3 on the 30S subunit to which N-formylmethionyl-tRNA(fMet) subsequently binds. Helps modulate mRNA selection, yielding the 30S pre-initiation complex (PIC). Upon addition of the 50S ribosomal subunit IF-1, IF-2 and IF-3 are released leaving the mature 70S translation initiation complex. The chain is Translation initiation factor IF-1 from Pelotomaculum thermopropionicum (strain DSM 13744 / JCM 10971 / SI).